The following is a 341-amino-acid chain: Mytilin-2 (341 aa).

The signal sequence occupies residues 1 to 24; that stretch reads MFKQSYQLCLVFLLFVCFYQSVKG.

Component of the organic matrix of calcified shell layers like nacre and prisms.

It is found in the secreted. This chain is Mytilin-2, found in Mytilus californianus (California mussel).